Here is a 515-residue protein sequence, read N- to C-terminus: 1-pyrroline-5-carboxylate dehydrogenase (515 aa).

Catalysis depends on residues Glu286 and Cys320.

It belongs to the aldehyde dehydrogenase family. RocA subfamily.

The catalysed reaction is L-glutamate 5-semialdehyde + NAD(+) + H2O = L-glutamate + NADH + 2 H(+). Its pathway is amino-acid degradation; L-proline degradation into L-glutamate; L-glutamate from L-proline: step 2/2. This is 1-pyrroline-5-carboxylate dehydrogenase (rocA) from Bacillus subtilis (strain 168).